A 227-amino-acid chain; its full sequence is Large ribosomal subunit protein uL1 (227 aa).

This sequence belongs to the universal ribosomal protein uL1 family. As to quaternary structure, part of the 50S ribosomal subunit.

Its function is as follows. Binds directly to 23S rRNA. The L1 stalk is quite mobile in the ribosome, and is involved in E site tRNA release. Protein L1 is also a translational repressor protein, it controls the translation of the L11 operon by binding to its mRNA. The protein is Large ribosomal subunit protein uL1 of Brevibacillus brevis (strain 47 / JCM 6285 / NBRC 100599).